We begin with the raw amino-acid sequence, 498 residues long: Probable cytosol aminopeptidase (498 aa).

Mn(2+)-binding residues include K263 and D268. Residue K275 is part of the active site. Residues D286, D345, and E347 each coordinate Mn(2+). R349 is a catalytic residue.

Belongs to the peptidase M17 family. Mn(2+) serves as cofactor.

The protein resides in the cytoplasm. It catalyses the reaction Release of an N-terminal amino acid, Xaa-|-Yaa-, in which Xaa is preferably Leu, but may be other amino acids including Pro although not Arg or Lys, and Yaa may be Pro. Amino acid amides and methyl esters are also readily hydrolyzed, but rates on arylamides are exceedingly low.. It carries out the reaction Release of an N-terminal amino acid, preferentially leucine, but not glutamic or aspartic acids.. Presumably involved in the processing and regular turnover of intracellular proteins. Catalyzes the removal of unsubstituted N-terminal amino acids from various peptides. The sequence is that of Probable cytosol aminopeptidase from Rhodopseudomonas palustris (strain BisA53).